The following is a 510-amino-acid chain: NAD(P)H-quinone oxidoreductase subunit 2 B, chloroplastic (510 aa).

13 helical membrane-spanning segments follow: residues 24 to 44, 57 to 77, 99 to 119, 124 to 144, 149 to 169, 183 to 203, 227 to 247, 295 to 315, 323 to 343, 354 to 374, 395 to 415, 428 to 448, and 484 to 504; these read LLLF…GLIL, IPWF…ALLF, IFQF…VEYI, MAIT…MFLC, LITI…LSGY, YLLM…WLYG, PGIL…LSLA, WHLL…LIAI, MLAY…IVGD, YMLF…LFGL, ALSL…AGFF, GLYF…YYYL, and MIVC…IIAI.

The protein belongs to the complex I subunit 2 family. As to quaternary structure, NDH is composed of at least 16 different subunits, 5 of which are encoded in the nucleus.

Its subcellular location is the plastid. The protein resides in the chloroplast thylakoid membrane. It carries out the reaction a plastoquinone + NADH + (n+1) H(+)(in) = a plastoquinol + NAD(+) + n H(+)(out). It catalyses the reaction a plastoquinone + NADPH + (n+1) H(+)(in) = a plastoquinol + NADP(+) + n H(+)(out). In terms of biological role, NDH shuttles electrons from NAD(P)H:plastoquinone, via FMN and iron-sulfur (Fe-S) centers, to quinones in the photosynthetic chain and possibly in a chloroplast respiratory chain. The immediate electron acceptor for the enzyme in this species is believed to be plastoquinone. Couples the redox reaction to proton translocation, and thus conserves the redox energy in a proton gradient. In Eucalyptus globulus subsp. globulus (Tasmanian blue gum), this protein is NAD(P)H-quinone oxidoreductase subunit 2 B, chloroplastic.